We begin with the raw amino-acid sequence, 887 residues long: Chaperone protein ClpB 2 (887 aa).

The region spanning 6–147 is the Clp R domain; the sequence is PTKFTDKAWE…AATVKAIRGA (142 aa). Repeat stretches follow at residues 9–73 and 84–147; these read FTDK…ARQQ and CGRS…IRGA. The interval 160–342 is NBD1; the sequence is AALEKYGRDL…RRFQQVYIGQ (183 aa). 207 to 214 is a binding site for ATP; it reads GEPGVGKT. The tract at residues 343-559 is linker; sequence PSVEDTISIL…IAEIVAKWTG (217 aa). Positions 393–535 form a coiled coil; that stretch reads IDLVDEAAAK…TEAQLLELQA (143 aa). Residues 569–780 form an NBD2 region; the sequence is ERQKLLQLEQ…RIDDVILFHG (212 aa). 619-626 contacts ATP; the sequence is GPTGVGKT. Positions 781 to 887 are C-terminal; it reads LGRTELAQIA…TGDRDTVSAS (107 aa).

It belongs to the ClpA/ClpB family. In terms of assembly, homohexamer. The oligomerization is ATP-dependent.

The protein resides in the cytoplasm. Functionally, part of a stress-induced multi-chaperone system, it is involved in the recovery of the cell from heat-induced damage, in cooperation with DnaK, DnaJ and GrpE. Acts before DnaK, in the processing of protein aggregates. Protein binding stimulates the ATPase activity; ATP hydrolysis unfolds the denatured protein aggregates, which probably helps expose new hydrophobic binding sites on the surface of ClpB-bound aggregates, contributing to the solubilization and refolding of denatured protein aggregates by DnaK. This Thermosynechococcus vestitus (strain NIES-2133 / IAM M-273 / BP-1) protein is Chaperone protein ClpB 2 (clpB2).